The primary structure comprises 642 residues: Sterol O-acyltransferase 2 (642 aa).

The tract at residues 174–194 (KSSPDAVDSVGKNDGAAPTTV) is disordered. Phosphoserine is present on residues serine 175 and serine 176. The next 5 membrane-spanning stretches (helical) occupy residues 215–235 (FSGL…KALI), 292–312 (TGWI…MYLT), 404–424 (ISAK…QIEY), 442–462 (IFGT…PVAM), and 485–505 (LLVD…YLIW). The FYXDWWN motif signature appears at 523–529 (FYGDWWN). The next 2 helical transmembrane spans lie at 567–587 (ATLM…YVIF) and 622–642 (VIFW…YLTF). Histidine 579 is an active-site residue.

Belongs to the membrane-bound acyltransferase family. Sterol o-acyltransferase subfamily.

The protein localises to the endoplasmic reticulum membrane. It carries out the reaction ergosterol + an acyl-CoA = ergosteryl ester + CoA. The catalysed reaction is zymosterol + an acyl-CoA = zymosterol ester + CoA. Sterol O-acyltransferase that catalyzes the formation of stery esters. This Saccharomyces cerevisiae (strain ATCC 204508 / S288c) (Baker's yeast) protein is Sterol O-acyltransferase 2.